A 255-amino-acid chain; its full sequence is Hydroxyacylglutathione hydrolase (255 aa).

Zn(2+)-binding residues include H53, H55, D57, H58, H110, D127, and H165.

This sequence belongs to the metallo-beta-lactamase superfamily. Glyoxalase II family. As to quaternary structure, monomer. The cofactor is Zn(2+).

The enzyme catalyses an S-(2-hydroxyacyl)glutathione + H2O = a 2-hydroxy carboxylate + glutathione + H(+). It participates in secondary metabolite metabolism; methylglyoxal degradation; (R)-lactate from methylglyoxal: step 2/2. In terms of biological role, thiolesterase that catalyzes the hydrolysis of S-D-lactoyl-glutathione to form glutathione and D-lactic acid. The chain is Hydroxyacylglutathione hydrolase from Xanthomonas euvesicatoria pv. vesicatoria (strain 85-10) (Xanthomonas campestris pv. vesicatoria).